Here is a 285-residue protein sequence, read N- to C-terminus: UPF0354 protein SA1564 (285 aa).

It belongs to the UPF0354 family.

The sequence is that of UPF0354 protein SA1564 from Staphylococcus aureus (strain N315).